The sequence spans 93 residues: Large ribosomal subunit protein uL23cz/uL23cy (93 aa).

Belongs to the universal ribosomal protein uL23 family. As to quaternary structure, part of the 50S ribosomal subunit.

The protein resides in the plastid. It is found in the chloroplast. Binds to 23S rRNA. This chain is Large ribosomal subunit protein uL23cz/uL23cy (rpl23-A), found in Drimys granadensis.